An 83-amino-acid polypeptide reads, in one-letter code: MTDSAKPEVSGLSFEKAVAELESIVARLERGDVALDESIEIYERGEALKKHCETLLSAAENRIEKIRLDRAGKPQGVEPLDGA.

The protein belongs to the XseB family. As to quaternary structure, heterooligomer composed of large and small subunits.

It localises to the cytoplasm. The catalysed reaction is Exonucleolytic cleavage in either 5'- to 3'- or 3'- to 5'-direction to yield nucleoside 5'-phosphates.. Functionally, bidirectionally degrades single-stranded DNA into large acid-insoluble oligonucleotides, which are then degraded further into small acid-soluble oligonucleotides. This chain is Exodeoxyribonuclease 7 small subunit, found in Rhizobium leguminosarum bv. trifolii (strain WSM2304).